A 197-amino-acid polypeptide reads, in one-letter code: Holliday junction branch migration complex subunit RuvA (197 aa).

The tract at residues 1–63 (MFEYLNGKLV…EDAHSLYGFV (63 aa)) is domain I. Residues 64–142 (NESEKALFLR…ATGAVGISLL (79 aa)) are domain II. The tract at residues 142 to 146 (LDAAP) is flexible linker. The segment at 147–197 (AGNLALEEAIEALQALGYKATELKKIEKKLEQEAGLTSEEYIKSALKLMMK) is domain III.

This sequence belongs to the RuvA family. Homotetramer. Forms an RuvA(8)-RuvB(12)-Holliday junction (HJ) complex. HJ DNA is sandwiched between 2 RuvA tetramers; dsDNA enters through RuvA and exits via RuvB. An RuvB hexamer assembles on each DNA strand where it exits the tetramer. Each RuvB hexamer is contacted by two RuvA subunits (via domain III) on 2 adjacent RuvB subunits; this complex drives branch migration. In the full resolvosome a probable DNA-RuvA(4)-RuvB(12)-RuvC(2) complex forms which resolves the HJ.

Its subcellular location is the cytoplasm. The RuvA-RuvB-RuvC complex processes Holliday junction (HJ) DNA during genetic recombination and DNA repair, while the RuvA-RuvB complex plays an important role in the rescue of blocked DNA replication forks via replication fork reversal (RFR). RuvA specifically binds to HJ cruciform DNA, conferring on it an open structure. The RuvB hexamer acts as an ATP-dependent pump, pulling dsDNA into and through the RuvAB complex. HJ branch migration allows RuvC to scan DNA until it finds its consensus sequence, where it cleaves and resolves the cruciform DNA. The protein is Holliday junction branch migration complex subunit RuvA of Lactococcus lactis subsp. cremoris (strain SK11).